The following is a 256-amino-acid chain: POU domain class 2-associating factor 1 (256 aa).

A disordered region spans residues 1-24 (MLWQKSTAPEQAPAPPRPYQGVRV). In terms of domain architecture, OCA spans 16–38 (PRPYQGVRVKEPVKELLRRKRGH).

This sequence belongs to the POU2AF family. Interacts with POU2F1/OCT1 and POU2F2/OCT2; the interaction increases POU2F1 and POU2F2 transactivation activity. Ubiquitinated; mediated by SIAH1 or SIAH2 and leading to its subsequent proteasomal degradation. As to expression, B-cell specific.

It is found in the nucleus. Functionally, transcriptional coactivator that specifically associates with either POU2F1/OCT1 or POU2F2/OCT2. It boosts the POU2F1/OCT1 mediated promoter activity and to a lesser extent, that of POU2F2/OCT2. It recognizes the POU domains of POU2F1/OCT1 and POU2F2/OCT2. It is essential for the response of B-cells to antigens and required for the formation of germinal centers. Regulates IL6 expression in B cells as POU2F2/OCT2 coactivator. This chain is POU domain class 2-associating factor 1, found in Mus musculus (Mouse).